We begin with the raw amino-acid sequence, 180 residues long: Peptidyl-tRNA hydrolase (180 aa).

Tyrosine 15 is a tRNA binding site. The active-site Proton acceptor is the histidine 20. The tRNA site is built by phenylalanine 67, asparagine 69, and asparagine 115.

Belongs to the PTH family. Monomer.

It is found in the cytoplasm. It catalyses the reaction an N-acyl-L-alpha-aminoacyl-tRNA + H2O = an N-acyl-L-amino acid + a tRNA + H(+). Its function is as follows. Hydrolyzes ribosome-free peptidyl-tRNAs (with 1 or more amino acids incorporated), which drop off the ribosome during protein synthesis, or as a result of ribosome stalling. Functionally, catalyzes the release of premature peptidyl moieties from peptidyl-tRNA molecules trapped in stalled 50S ribosomal subunits, and thus maintains levels of free tRNAs and 50S ribosomes. This Chlamydia pneumoniae (Chlamydophila pneumoniae) protein is Peptidyl-tRNA hydrolase.